We begin with the raw amino-acid sequence, 1701 residues long: Merozoite surface protein 1 (1701 aa).

An N-terminal signal peptide occupies residues 1–19 (MKIIFFLCSFLFFIINTQC). The segment covering 89 to 100 (GSGGSVASGGSG) has biased composition (gly residues). Residues 89 to 118 (GSGGSVASGGSGNSRRTNPSDNSSDSNTKT) form a disordered region. Positions 101–116 (NSRRTNPSDNSSDSNT) are enriched in low complexity. 2 N-linked (GlcNAc...) asparagine glycosylation sites follow: N110 and N239. The disordered stretch occupies residues 322–344 (DAENPTTGSKPNPLPENKKKEVE). N-linked (GlcNAc...) asparagine glycans are attached at residues N470, N536, and N607. The disordered stretch occupies residues 704 to 739 (SETTEDGGHSTHTLSQSGETEVTEETEVTEETVGHT). Over residues 724-733 (EVTEETEVTE) the composition is skewed to acidic residues. Residues N802, N899, N919, N965, N991, N1089, and N1196 are each glycosylated (N-linked (GlcNAc...) asparagine). The span at 889-927 (TGTSSTSSPGNTTVNTAQSATHSNSQNQQSNASSTNTQN) shows a compositional bias: low complexity. Residues 889–936 (TGTSSTSSPGNTTVNTAQSATHSNSQNQQSNASSTNTQNGVAVSSGPA) form a disordered region. Disordered stretches follow at residues 1230-1259 (TPPQ…TQIP) and 1451-1472 (KEKF…DEQK). A compositionally biased stretch (polar residues) spans 1245–1259 (VSGSSGSTKEETQIP). Residues 1456 to 1465 (SSPPTTPPSP) are compositionally biased toward pro residues. Residue N1588 is glycosylated (N-linked (GlcNAc...) asparagine). 2 consecutive EGF-like domains span residues 1592 to 1632 (HQCV…VENP) and 1633 to 1680 (NPTC…IFCS). 6 disulfide bridges follow: C1594–C1605, C1599–C1615, C1617–C1628, C1636–C1649, C1643–C1663, and C1665–C1679. S1680 is lipidated: GPI-anchor amidated serine. A propeptide spans 1681–1701 (SSNFLGISFLLILMLILYSFI) (removed in mature form).

In terms of assembly, forms a complex composed of subunits p83, p30, p38, and p42 which remain non-covalently associated; the complex is formed at the merozoite surface prior to egress from host erythrocytes. Forms a complex composed of processed MSP1 subunits, MSP6 subunit p36 and MSP7; the complex is formed at the merozoite surface prior to egress from host erythrocytes. Within the complex, interacts (via subunit p38) with MSP6 subunit p36 and (via subunits p83, p30 and p38) with MSP7 (via subunit p22). Forms a complex composed of MSP1, MSP6, DBLMSP1 and DBLMSP2. Within the complex, interacts (via subunit p38) with DBLMSP1 and DBLMSP2. Forms a complex composed of MSP1, and rhoptry proteins RhopH3, RAP1 and CLAG9/RhopH3. Within the complex, interacts (via subunits p42 and p19) with RhopH3 (via C-terminus). Forms a complex composed of MSP1, MSP6, MSP7, MSP9 and MSP3; within the complex, MSP6 and MSP9 mediate the binding to the host erythrocyte. Interacts (via subunits p19 and p42) with MSP9; the interaction is direct; MSP1 subunits p19 or p42, and MSP9 form a co-ligand complex that interacts with host SLC4A1/Band 3 protein. May interact with PFD6. Interacts with host spectrin. Interacts with host glycophorin GYPA in a sialic acid-independent manner. As to quaternary structure, interacts with host proinflammatory cytokine S100P; the interaction blocks S100P inflammatory and chemotactic activities. In terms of assembly, interacts with host SLC4A1/Band 3 (via 5ABC region) on the host erythrocyte surface in a sialic acid-independent manner. Post-translationally, the p190 precursor is cleaved by SUB1 prior to merozoite egress into 4 subunits p83, p30, p38, and p42 which remain non-covalently associated. SUB1-mediated proteolytic cleavage occurs in an orderly manner; the first cleavage occurs at the p30/p38 site, followed by cleavage at the p83/p30 site, the last cleavage occurs at the p38/p42 site. The order of cleavage is essential for parasite viability. SUB1-mediated processing is essential for merozoite egress. In a second processing step during erythrocyte invasion, p42 is cleaved by SUB2 into p33 and p19; the latter remains attached to the merozoite surface via its GPI-anchor and is endocytosed during the subsequent ring stage.

The protein localises to the cell membrane. Its subcellular location is the secreted. It localises to the vacuole membrane. Functionally, during the asexual blood stage, involved in merozoite egress from host erythrocytes possibly via its interaction with the host cytoskeleton protein spectrin resulting in the destabilization of the host cytoskeleton and thus leading to erythrocyte cell membrane rupture. Involved in the binding to host erythrocytes and is required for host erythrocyte invasion. By binding to host proinflammatory cytokine S100P may interfere with host immune responses. In terms of biological role, involved in merozoite invasion of host erythrocytes. May play a role in the biogenesis and/or function of the food vacuole during the intraerythrocytic development. In Plasmodium falciparum (isolate mad20 / Papua New Guinea), this protein is Merozoite surface protein 1.